The primary structure comprises 398 residues: NADH-quinone oxidoreductase subunit D (398 aa).

It belongs to the complex I 49 kDa subunit family. In terms of assembly, NDH-1 is composed of 14 different subunits. Subunits NuoB, C, D, E, F, and G constitute the peripheral sector of the complex.

The protein resides in the cell inner membrane. It carries out the reaction a quinone + NADH + 5 H(+)(in) = a quinol + NAD(+) + 4 H(+)(out). In terms of biological role, NDH-1 shuttles electrons from NADH, via FMN and iron-sulfur (Fe-S) centers, to quinones in the respiratory chain. The immediate electron acceptor for the enzyme in this species is believed to be ubiquinone. Couples the redox reaction to proton translocation (for every two electrons transferred, four hydrogen ions are translocated across the cytoplasmic membrane), and thus conserves the redox energy in a proton gradient. This Rhodospirillum centenum (strain ATCC 51521 / SW) protein is NADH-quinone oxidoreductase subunit D.